We begin with the raw amino-acid sequence, 221 residues long: Translation initiation factor 6 (221 aa).

It belongs to the eIF-6 family.

Binds to the 50S ribosomal subunit and prevents its association with the 30S ribosomal subunit to form the 70S initiation complex. The protein is Translation initiation factor 6 of Methanosphaerula palustris (strain ATCC BAA-1556 / DSM 19958 / E1-9c).